The following is a 359-amino-acid chain: DNA-directed RNA polymerase RPB3-11 homolog (359 aa).

The protein in the N-terminal section; belongs to the archaeal RpoD/eukaryotic RPB3 RNA polymerase subunit family. This sequence in the C-terminal section; belongs to the archaeal RpoL/eukaryotic RPB11/RPC19 RNA polymerase subunit family. As to quaternary structure, part of the viral DNA-directed RNA polymerase that consists of 8 polII-like subunits (RPB1, RPB2, RPB3, RPB5, RPB6, RPB7, RPB9, RPB10), a capping enzyme and a termination factor.

The protein localises to the host cytoplasm. It localises to the virion. Component of the DNA-directed RNA polymerase (RNAP) that catalyzes the transcription in the cytoplasm of viral DNA into RNA using the four ribonucleoside triphosphates as substrates. The polypeptide is DNA-directed RNA polymerase RPB3-11 homolog (Ornithodoros (relapsing fever ticks)).